The sequence spans 137 residues: Ribosome-binding factor A (137 aa).

It belongs to the RbfA family. Monomer. Binds 30S ribosomal subunits, but not 50S ribosomal subunits or 70S ribosomes.

It localises to the cytoplasm. In terms of biological role, one of several proteins that assist in the late maturation steps of the functional core of the 30S ribosomal subunit. Associates with free 30S ribosomal subunits (but not with 30S subunits that are part of 70S ribosomes or polysomes). Required for efficient processing of 16S rRNA. May interact with the 5'-terminal helix region of 16S rRNA. The chain is Ribosome-binding factor A from Cereibacter sphaeroides (strain KD131 / KCTC 12085) (Rhodobacter sphaeroides).